The primary structure comprises 393 residues: Flap endonuclease 1 (393 aa).

The tract at residues 1–108 (MGVLGLSKLL…SELESRRQRA (108 aa)) is N-domain. D34 is a Mg(2+) binding site. R74 contacts DNA. Position 90 (D90) interacts with Mg(2+). Basic and acidic residues predominate over residues 99-120 (SELESRRQRAEDAKHEFEKAKE). The interval 99–127 (SELESRRQRAEDAKHEFEKAKEEGDDEAM) is disordered. The interval 126-257 (AMEKMSKRMV…HKAWEGIKKY (132 aa)) is I-domain. The Mg(2+) site is built by E162, E164, D183, and D185. E162 serves as a coordination point for DNA. G235 and D237 together coordinate DNA. Position 237 (D237) interacts with Mg(2+). The tract at residues 340–348 (TQGRLDQFF) is interaction with PCNA. The segment at 358 to 393 (NSEASTAGTKRNRGAVALPGVLQRKSSSGHKKAVKK) is disordered. The segment covering 384–393 (SSGHKKAVKK) has biased composition (basic residues).

The protein belongs to the XPG/RAD2 endonuclease family. FEN1 subfamily. In terms of assembly, interacts with PCNA. Three molecules of FEN1 bind to one PCNA trimer with each molecule binding to one PCNA monomer. PCNA stimulates the nuclease activity without altering cleavage specificity. Mg(2+) serves as cofactor. Phosphorylated. Phosphorylation upon DNA damage induces relocalization to the nuclear plasma.

The protein localises to the nucleus. It is found in the nucleolus. Its subcellular location is the nucleoplasm. It localises to the mitochondrion. Structure-specific nuclease with 5'-flap endonuclease and 5'-3' exonuclease activities involved in DNA replication and repair. During DNA replication, cleaves the 5'-overhanging flap structure that is generated by displacement synthesis when DNA polymerase encounters the 5'-end of a downstream Okazaki fragment. It enters the flap from the 5'-end and then tracks to cleave the flap base, leaving a nick for ligation. Also involved in the long patch base excision repair (LP-BER) pathway, by cleaving within the apurinic/apyrimidinic (AP) site-terminated flap. Acts as a genome stabilization factor that prevents flaps from equilibrating into structures that lead to duplications and deletions. Also possesses 5'-3' exonuclease activity on nicked or gapped double-stranded DNA, and exhibits RNase H activity. Also involved in replication and repair of rDNA and in repairing mitochondrial DNA. The protein is Flap endonuclease 1 of Trypanosoma brucei brucei (strain 927/4 GUTat10.1).